The sequence spans 445 residues: N-succinylarginine dihydrolase (445 aa).

Residues 19–28 (AGLSFGNVAS), asparagine 110, and 137–138 (HR) each bind substrate. Glutamate 174 is a catalytic residue. Position 214 (arginine 214) interacts with substrate. Histidine 250 is an active-site residue. The substrate site is built by aspartate 252 and asparagine 363. Catalysis depends on cysteine 369, which acts as the Nucleophile.

Belongs to the succinylarginine dihydrolase family. In terms of assembly, homodimer.

The enzyme catalyses N(2)-succinyl-L-arginine + 2 H2O + 2 H(+) = N(2)-succinyl-L-ornithine + 2 NH4(+) + CO2. Its pathway is amino-acid degradation; L-arginine degradation via AST pathway; L-glutamate and succinate from L-arginine: step 2/5. In terms of biological role, catalyzes the hydrolysis of N(2)-succinylarginine into N(2)-succinylornithine, ammonia and CO(2). The sequence is that of N-succinylarginine dihydrolase from Shewanella sediminis (strain HAW-EB3).